A 289-amino-acid chain; its full sequence is 4-hydroxy-tetrahydrodipicolinate synthase (289 aa).

T42 is a binding site for pyruvate. The active-site Proton donor/acceptor is Y129. The active-site Schiff-base intermediate with substrate is the K157. I198 serves as a coordination point for pyruvate.

The protein belongs to the DapA family. As to quaternary structure, homotetramer; dimer of dimers.

The protein localises to the cytoplasm. The catalysed reaction is L-aspartate 4-semialdehyde + pyruvate = (2S,4S)-4-hydroxy-2,3,4,5-tetrahydrodipicolinate + H2O + H(+). The protein operates within amino-acid biosynthesis; L-lysine biosynthesis via DAP pathway; (S)-tetrahydrodipicolinate from L-aspartate: step 3/4. Functionally, catalyzes the condensation of (S)-aspartate-beta-semialdehyde [(S)-ASA] and pyruvate to 4-hydroxy-tetrahydrodipicolinate (HTPA). The sequence is that of 4-hydroxy-tetrahydrodipicolinate synthase from Chlamydia caviae (strain ATCC VR-813 / DSM 19441 / 03DC25 / GPIC) (Chlamydophila caviae).